A 393-amino-acid chain; its full sequence is Acetylornithine aminotransferase (393 aa).

Residues 95–96 (GA) and Phe127 contribute to the pyridoxal 5'-phosphate site. Arg130 is a N(2)-acetyl-L-ornithine binding site. Position 214-217 (214-217 (DEVQ)) interacts with pyridoxal 5'-phosphate. N6-(pyridoxal phosphate)lysine is present on Lys243. Ser271 provides a ligand contact to N(2)-acetyl-L-ornithine. Thr272 contacts pyridoxal 5'-phosphate.

The protein belongs to the class-III pyridoxal-phosphate-dependent aminotransferase family. ArgD subfamily. As to quaternary structure, homodimer. The cofactor is pyridoxal 5'-phosphate.

It localises to the cytoplasm. The catalysed reaction is N(2)-acetyl-L-ornithine + 2-oxoglutarate = N-acetyl-L-glutamate 5-semialdehyde + L-glutamate. It participates in amino-acid biosynthesis; L-arginine biosynthesis; N(2)-acetyl-L-ornithine from L-glutamate: step 4/4. This is Acetylornithine aminotransferase from Nitrosomonas europaea (strain ATCC 19718 / CIP 103999 / KCTC 2705 / NBRC 14298).